A 299-amino-acid polypeptide reads, in one-letter code: Bifunctional methyltransferase-like/endonuclease (299 aa).

A probable methylated-DNA--protein-cysteine methyltransferase-like region spans residues 1–80 (MLSSKLLDIN…NLIVSPMQKA (80 aa)). Residues 81–299 (LLEKEVKIIG…GRGDSNPGRD (219 aa)) are endonuclease V. 2 residues coordinate Mg(2+): Asp135 and Asn197.

This sequence in the N-terminal section; belongs to the MGMT family. The protein in the C-terminal section; belongs to the endonuclease V family. Mg(2+) is required as a cofactor.

The protein localises to the cytoplasm. It catalyses the reaction Endonucleolytic cleavage at apurinic or apyrimidinic sites to products with a 5'-phosphate.. Functionally, DNA repair enzyme involved in the repair of deaminated bases. Selectively cleaves double-stranded DNA at the second phosphodiester bond 3' to a deoxyinosine leaving behind the intact lesion on the nicked DNA. The chain is Bifunctional methyltransferase-like/endonuclease from Nanoarchaeum equitans (strain Kin4-M).